The following is a 150-amino-acid chain: Large ribosomal subunit protein bL9 (150 aa).

It belongs to the bacterial ribosomal protein bL9 family.

Functionally, binds to the 23S rRNA. In Shewanella frigidimarina (strain NCIMB 400), this protein is Large ribosomal subunit protein bL9.